Consider the following 423-residue polypeptide: Limonoid 21-O-acetyltransferse (423 aa).

Catalysis depends on proton acceptor residues histidine 152 and aspartate 362.

The protein belongs to the plant acyltransferase family. As to quaternary structure, monomer. Mainly expressed in petioles.

It catalyses the reaction isomeliandiol + acetyl-CoA = 21-O-acetyl-isomeliandiol + CoA. Its pathway is secondary metabolite biosynthesis; terpenoid biosynthesis. Acetyltransferase involved in the biosynthesis of limonoids triterpene natural products such as azadirachtin, an antifeedant widely used as bioinsecticide, and possessing many medicinal applications including anti-tumoral, anti-malarial, anti-rheumatic, antibacterial, anti-inflammatory, anti-pyretic and diuretic effects. Catalyzes the formation of 21-O-acetyl-isomeliandiol from isomeliandiol. The sequence is that of Limonoid 21-O-acetyltransferse from Melia azedarach (Chinaberry tree).